The following is a 142-amino-acid chain: Cytochrome c-type biogenesis protein CcmE (142 aa).

Topologically, residues 1–2 (MK) are cytoplasmic. Residues 3–23 (GKYLLGILVILGALGYMVFGG) traverse the membrane as a helical; Signal-anchor for type II membrane protein segment. The Periplasmic portion of the chain corresponds to 24 to 142 (LGRNLVYFLT…EVRKLIEEAQ (119 aa)). 2 residues coordinate heme: H118 and Y122.

It belongs to the CcmE/CycJ family.

Its subcellular location is the cell inner membrane. In terms of biological role, heme chaperone required for the biogenesis of c-type cytochromes. Transiently binds heme delivered by CcmC and transfers the heme to apo-cytochromes in a process facilitated by CcmF and CcmH. The sequence is that of Cytochrome c-type biogenesis protein CcmE from Thermus thermophilus (strain ATCC BAA-163 / DSM 7039 / HB27).